The sequence spans 292 residues: 2-dehydro-3-deoxygalactonokinase (292 aa).

It belongs to the DgoK family.

It catalyses the reaction 2-dehydro-3-deoxy-D-galactonate + ATP = 2-dehydro-3-deoxy-6-phospho-D-galactonate + ADP + H(+). The protein operates within carbohydrate acid metabolism; D-galactonate degradation; D-glyceraldehyde 3-phosphate and pyruvate from D-galactonate: step 2/3. In Escherichia coli (strain K12), this protein is 2-dehydro-3-deoxygalactonokinase (dgoK).